The following is a 371-amino-acid chain: tRNA-specific 2-thiouridylase MnmA (371 aa).

Residues 14–21 and Met-40 each bind ATP; that span reads GMSGGVDS. Residues 100–102 are interaction with target base in tRNA; the sequence is NPD. Cys-105 serves as the catalytic Nucleophile. Cys-105 and Cys-205 are disulfide-bonded. Residue Gly-129 coordinates ATP. Positions 155–157 are interaction with tRNA; sequence KDQ. Cys-205 functions as the Cysteine persulfide intermediate in the catalytic mechanism. The interval 321 to 322 is interaction with tRNA; it reads RY.

The protein belongs to the MnmA/TRMU family.

It localises to the cytoplasm. The catalysed reaction is S-sulfanyl-L-cysteinyl-[protein] + uridine(34) in tRNA + AH2 + ATP = 2-thiouridine(34) in tRNA + L-cysteinyl-[protein] + A + AMP + diphosphate + H(+). In terms of biological role, catalyzes the 2-thiolation of uridine at the wobble position (U34) of tRNA, leading to the formation of s(2)U34. The protein is tRNA-specific 2-thiouridylase MnmA of Bordetella pertussis (strain Tohama I / ATCC BAA-589 / NCTC 13251).